We begin with the raw amino-acid sequence, 257 residues long: UPF0246 protein RSKD131_2757 (257 aa).

This sequence belongs to the UPF0246 family.

The sequence is that of UPF0246 protein RSKD131_2757 from Cereibacter sphaeroides (strain KD131 / KCTC 12085) (Rhodobacter sphaeroides).